A 424-amino-acid chain; its full sequence is L-glutamine:2-deoxy-scyllo-inosose aminotransferase (424 aa).

Residue Lys202 is modified to N6-(pyridoxal phosphate)lysine.

It belongs to the DegT/DnrJ/EryC1 family. L-glutamine:2-deoxy-scyllo-inosose/scyllo-inosose aminotransferase subfamily. It depends on pyridoxal 5'-phosphate as a cofactor.

The catalysed reaction is 2-deoxy-L-scyllo-inosose + L-glutamine = 2-deoxy-scyllo-inosamine + 2-oxoglutaramate. It carries out the reaction 3-amino-2,3-dideoxy-scyllo-inosose + L-glutamine = 2-deoxystreptamine + 2-oxoglutaramate. It participates in metabolic intermediate biosynthesis; 2-deoxystreptamine biosynthesis; 2-deoxystreptamine from D-glucose 6-phosphate: step 2/4. Its pathway is antibiotic biosynthesis; tobramycin biosynthesis. Catalyzes the PLP-dependent transamination of 2-deoxy-scyllo-inosose (2-DOI) to form 2-deoxy-scyllo-inosamine (2-DOIA) using L-glutamine as the amino donor. Also catalyzes the transamination of 3-amino-2,3-dideoxy-scyllo-inosose (keto-2-DOIA) into 2-deoxystreptamine (2-DOS). This is L-glutamine:2-deoxy-scyllo-inosose aminotransferase (tbmB) from Streptoalloteichus tenebrarius (strain ATCC 17920 / DSM 40477 / JCM 4838 / CBS 697.72 / NBRC 16177 / NCIMB 11028 / NRRL B-12390 / A12253. 1 / ISP 5477) (Streptomyces tenebrarius).